We begin with the raw amino-acid sequence, 406 residues long: Putative nickel insertion protein (406 aa).

It belongs to the LarC family.

The polypeptide is Putative nickel insertion protein (Methanosphaera stadtmanae (strain ATCC 43021 / DSM 3091 / JCM 11832 / MCB-3)).